The sequence spans 376 residues: MLSVPASSRIDFAGSPRPTVGVEWEFALVDAHTRDLSNEAATVIAEIGETPHVHKELLRNTVEVVTGICENTGEAMADLHDTLKVVRRIVRDRGMELFCAGTHPFANWSTQQLTDAPRYAELIKRTQWWGRQMLIWGVHVHVGISSAHKVMPIISSLLNQYPHLLALSASSPYWDGSDTGYASNRAMMFQQLPTAGLPFQFQSWPEFERFVHDQKKTGIIDHMNEIRWDIRPSPHLGTVEIRVFDGVSNIAELGSLVALTHCLVVDLDRRLDAGEQLPVMPPWHVQENKWRAARYGLDAEIILDADSNERLVTEDLDDLLTRLQPVARSLDCADELAGVAEIYRHGASYQRQRRVAEEHDGDLLAVVDALVAELEL.

It belongs to the glutamate--cysteine ligase type 2 family. YbdK subfamily.

It carries out the reaction L-cysteine + L-glutamate + ATP = gamma-L-glutamyl-L-cysteine + ADP + phosphate + H(+). Its function is as follows. ATP-dependent carboxylate-amine ligase which exhibits weak glutamate--cysteine ligase activity. The protein is Putative glutamate--cysteine ligase 2-1 of Mycobacterium sp. (strain KMS).